The sequence spans 851 residues: Glutathione transporter 1 (851 aa).

Positions 1–14 are enriched in polar residues; the sequence is MTARNSASIPTSIR. Residues 1–116 are disordered; it reads MTARNSASIP…LDNETDSEVE (116 aa). N32 carries N-linked (GlcNAc...) asparagine glycosylation. Low complexity predominate over residues 33–68; that stretch reads LSTKTASKTSLTFRQSSSDESTSSYSGNHHNINIQH. Residues 74-92 show a composition bias toward polar residues; the sequence is FRTNSSSFSPNDYSISESP. N77 carries an N-linked (GlcNAc...) asparagine glycan. Phosphoserine is present on S93. Positions 105–134 form a coiled coil; it reads VQLDNETDSEVESEVEELERELEAIEDSVY. N109 is a glycosylation site (N-linked (GlcNAc...) asparagine). The next 2 membrane-spanning stretches (helical) occupy residues 156-176 and 179-199; these read TWVL…FFSL and PALS…GKLL. Residue N256 is glycosylated (N-linked (GlcNAc...) asparagine). 4 consecutive transmembrane segments (helical) span residues 259-279, 282-302, 333-353, and 405-425; these read WGYK…FAGL, RWIV…TVLF, FFAY…FIFK, and WVIC…VPIL. N-linked (GlcNAc...) asparagine glycosylation is found at N452 and N464. 5 consecutive transmembrane segments (helical) span residues 480–500, 531–551, 560–580, 592–612, and 642–662; these read YSMS…HCAL, APQW…IFTV, VWAL…QGVL, IITE…NLMI, and ILFF…VAVQ. Residue N691 is glycosylated (N-linked (GlcNAc...) asparagine). Transmembrane regions (helical) follow at residues 711-731, 757-777, and 791-811; these read YYPL…TWGL, PATG…NYVI, and VLAA…FLCV. Residue N843 is glycosylated (N-linked (GlcNAc...) asparagine).

Belongs to the oligopeptide OPT transporter family.

Its subcellular location is the endoplasmic reticulum membrane. The protein resides in the cell membrane. Functionally, high-affinity glutathione transporter which plays a role in scavenging glutathione from the extracellular environment for the maintenance of sulfur homeostasis. This Schizosaccharomyces pombe (strain 972 / ATCC 24843) (Fission yeast) protein is Glutathione transporter 1 (pgt1).